A 565-amino-acid polypeptide reads, in one-letter code: Thiol:disulfide interchange protein DsbD (565 aa).

An N-terminal signal peptide occupies residues 1-19 (MAQRIFTLILLLCSTSVFA). Cystine bridges form between Cys-122–Cys-128 and Cys-182–Cys-304. 7 helical membrane passes run 163 to 183 (LPFS…TPCV), 208 to 228 (LLTF…GLVV), 243 to 263 (YVLI…FGLF), 289 to 309 (GVFI…TAPL), 323 to 343 (WLGG…LMLI), 357 to 377 (WMEQ…VFLL), and 384 to 404 (IWGL…AFIT). The Thioredoxin domain maps to 434–565 (WAFGATHTAQ…FSAHLRDRQP (132 aa)). Cys-480 and Cys-483 form a disulfide bridge.

The protein belongs to the thioredoxin family. DsbD subfamily.

It localises to the cell inner membrane. The catalysed reaction is [protein]-dithiol + NAD(+) = [protein]-disulfide + NADH + H(+). The enzyme catalyses [protein]-dithiol + NADP(+) = [protein]-disulfide + NADPH + H(+). Its function is as follows. Required to facilitate the formation of correct disulfide bonds in some periplasmic proteins and for the assembly of the periplasmic c-type cytochromes. Acts by transferring electrons from cytoplasmic thioredoxin to the periplasm. This transfer involves a cascade of disulfide bond formation and reduction steps. This chain is Thiol:disulfide interchange protein DsbD, found in Escherichia coli O6:H1 (strain CFT073 / ATCC 700928 / UPEC).